A 175-amino-acid chain; its full sequence is 3-hydroxydecanoyl-[acyl-carrier-protein] dehydratase (175 aa).

The active site involves His-74.

Belongs to the thioester dehydratase family. FabA subfamily. As to quaternary structure, homodimer.

The protein resides in the cytoplasm. It catalyses the reaction a (3R)-hydroxyacyl-[ACP] = a (2E)-enoyl-[ACP] + H2O. The enzyme catalyses (3R)-hydroxydecanoyl-[ACP] = (2E)-decenoyl-[ACP] + H2O. It carries out the reaction (2E)-decenoyl-[ACP] = (3Z)-decenoyl-[ACP]. Its pathway is lipid metabolism; fatty acid biosynthesis. Necessary for the introduction of cis unsaturation into fatty acids. Catalyzes the dehydration of (3R)-3-hydroxydecanoyl-ACP to E-(2)-decenoyl-ACP and then its isomerization to Z-(3)-decenoyl-ACP. Can catalyze the dehydratase reaction for beta-hydroxyacyl-ACPs with saturated chain lengths up to 16:0, being most active on intermediate chain length. The chain is 3-hydroxydecanoyl-[acyl-carrier-protein] dehydratase from Alcanivorax borkumensis (strain ATCC 700651 / DSM 11573 / NCIMB 13689 / SK2).